Consider the following 323-residue polypeptide: MMSNENFDNDYNLPPPNDSAEDLKIFIKRYERSVDSTLLEIDENKREALEKYIEERDRKMKYEIECNERLQGWKKLAIEREISEEQSGEVQFPRWIDEWANTKLGGIFERIFSKMDSMQNDMNSRFDAMQNEMNSRFDAVQNEMTSMKGEMAEMKVEMVEMKRETIRLNTRIDLLEQKTEARFQSIEQRFNSIDQRFNSIDRRFDSMEQRLDSMDQKMETIDARSCRSIMLTRKLENTTRSDQGYLASPVPFLNGNEPANSGLPPIERVEDIDELSKEQCVQYLKGYGIMFSPAETIKLKKRLRDAVGLWSKASTEYEFHQFH.

Coiled-coil stretches lie at residues Ile-27–Glu-63 and Asn-131–Ser-225.

The protein belongs to the UPF0612 family.

In Schizosaccharomyces pombe (strain 972 / ATCC 24843) (Fission yeast), this protein is UPF0612 protein C569.01c.